The following is a 111-amino-acid chain: Photosystem II reaction center Psb28 protein (111 aa).

The protein belongs to the Psb28 family. Part of the photosystem II complex.

The protein localises to the cellular thylakoid membrane. This chain is Photosystem II reaction center Psb28 protein, found in Trichormus variabilis (strain ATCC 29413 / PCC 7937) (Anabaena variabilis).